Reading from the N-terminus, the 155-residue chain is Ribosome maturation factor RimP (155 aa).

Belongs to the RimP family.

It is found in the cytoplasm. In terms of biological role, required for maturation of 30S ribosomal subunits. The sequence is that of Ribosome maturation factor RimP from Prochlorococcus marinus (strain AS9601).